A 274-amino-acid polypeptide reads, in one-letter code: 3-methyl-2-oxobutanoate hydroxymethyltransferase (274 aa).

Mg(2+) contacts are provided by Asp-46 and Asp-85. 3-methyl-2-oxobutanoate is bound by residues 46 to 47, Asp-85, and Lys-115; that span reads DS. Glu-117 is a binding site for Mg(2+). The active-site Proton acceptor is the Glu-184.

This sequence belongs to the PanB family. In terms of assembly, homodecamer; pentamer of dimers. Mg(2+) serves as cofactor.

It is found in the cytoplasm. It carries out the reaction 3-methyl-2-oxobutanoate + (6R)-5,10-methylene-5,6,7,8-tetrahydrofolate + H2O = 2-dehydropantoate + (6S)-5,6,7,8-tetrahydrofolate. It participates in cofactor biosynthesis; (R)-pantothenate biosynthesis; (R)-pantoate from 3-methyl-2-oxobutanoate: step 1/2. Catalyzes the reversible reaction in which hydroxymethyl group from 5,10-methylenetetrahydrofolate is transferred onto alpha-ketoisovalerate to form ketopantoate. This is 3-methyl-2-oxobutanoate hydroxymethyltransferase from Thermoanaerobacter pseudethanolicus (strain ATCC 33223 / 39E) (Clostridium thermohydrosulfuricum).